We begin with the raw amino-acid sequence, 187 residues long: Ribosome-recycling factor (187 aa).

The protein belongs to the RRF family.

The protein localises to the cytoplasm. In terms of biological role, responsible for the release of ribosomes from messenger RNA at the termination of protein biosynthesis. May increase the efficiency of translation by recycling ribosomes from one round of translation to another. The protein is Ribosome-recycling factor of Orientia tsutsugamushi (strain Boryong) (Rickettsia tsutsugamushi).